The chain runs to 239 residues: Segregation and condensation protein A (239 aa).

The protein belongs to the ScpA family. In terms of assembly, component of a cohesin-like complex composed of ScpA, ScpB and the Smc homodimer, in which ScpA and ScpB bind to the head domain of Smc. The presence of the three proteins is required for the association of the complex with DNA.

It is found in the cytoplasm. Functionally, participates in chromosomal partition during cell division. May act via the formation of a condensin-like complex containing Smc and ScpB that pull DNA away from mid-cell into both cell halves. This Streptococcus suis (strain 98HAH33) protein is Segregation and condensation protein A.